The primary structure comprises 377 residues: Putative F-box protein At1g70380 (377 aa).

Residues Asn3–Ala48 enclose the F-box domain.

The protein is Putative F-box protein At1g70380 of Arabidopsis thaliana (Mouse-ear cress).